The sequence spans 186 residues: UPF0301 protein APL_0232 (186 aa).

This sequence belongs to the UPF0301 (AlgH) family.

This chain is UPF0301 protein APL_0232, found in Actinobacillus pleuropneumoniae serotype 5b (strain L20).